We begin with the raw amino-acid sequence, 375 residues long: MEERTLVILGVTGSIGTQTLDVLRKIEGIRLVGISFHTNVELAKKIVKEFQVENVVVTGDVSFECSAKVWKGPHALEDMMEALKPDITMVAVSGFSGLRAVLAALEHSRRVCLANKESLVCGGFLVKRKLKEKSVELIPVDSEHSAIFQVIEPDVQKIVLTASGGALRDWDLEKIETATPNDVLKHPVWSMGARITVDSATMVNKAFEVLEAMELFDLPFEKIDVKIHREGLVHGVVILPDGNVKMVFSPPDMRIPISYSLLYPKRAALGSFSLETMKISFDPVNPERYPAFFLLNQIKDSYALRTAFNAADEVAVDAFLKGKIKFGGIHRVIERTLERIDGYPEPENLEEVEQIHDEARKIAERVTEWLSSISS.

Residues threonine 12, glycine 13, serine 14, isoleucine 15, asparagine 39, and asparagine 115 each coordinate NADPH. Lysine 116 serves as a coordination point for 1-deoxy-D-xylulose 5-phosphate. Glutamate 117 lines the NADPH pocket. Residue aspartate 141 participates in Mn(2+) binding. The 1-deoxy-D-xylulose 5-phosphate site is built by serine 142, glutamate 143, serine 163, and histidine 186. Glutamate 143 contacts Mn(2+). Glycine 192 provides a ligand contact to NADPH. Residues serine 199, asparagine 204, lysine 205, and glutamate 208 each coordinate 1-deoxy-D-xylulose 5-phosphate. Residue glutamate 208 coordinates Mn(2+).

It belongs to the DXR family. The cofactor is Mg(2+). It depends on Mn(2+) as a cofactor.

The catalysed reaction is 2-C-methyl-D-erythritol 4-phosphate + NADP(+) = 1-deoxy-D-xylulose 5-phosphate + NADPH + H(+). It functions in the pathway isoprenoid biosynthesis; isopentenyl diphosphate biosynthesis via DXP pathway; isopentenyl diphosphate from 1-deoxy-D-xylulose 5-phosphate: step 1/6. Its function is as follows. Catalyzes the NADPH-dependent rearrangement and reduction of 1-deoxy-D-xylulose-5-phosphate (DXP) to 2-C-methyl-D-erythritol 4-phosphate (MEP). The protein is 1-deoxy-D-xylulose 5-phosphate reductoisomerase of Thermotoga neapolitana (strain ATCC 49049 / DSM 4359 / NBRC 107923 / NS-E).